The following is a 366-amino-acid chain: [Pyruvate dehydrogenase (acetyl-transferring)] kinase, mitochondrial (366 aa).

Histidine 121 is subject to Phosphohistidine; by autocatalysis. The Histidine kinase domain maps to 122–359; that stretch reads NNVVPMMALG…DAYLHLSRLG (238 aa). Residues 238-245, aspartate 278, 297-298, and 320-325 contribute to the ATP site; these read ELVKNSLR, ST, and GYGYGL.

This sequence belongs to the PDK/BCKDK protein kinase family. Homodimer. Autophosphorylated on Ser residues near N-terminus. In terms of tissue distribution, expressed constitutively and ubiquitously.

Its subcellular location is the mitochondrion. It carries out the reaction L-seryl-[pyruvate dehydrogenase E1 alpha subunit] + ATP = O-phospho-L-seryl-[pyruvate dehydrogenase E1 alpha subunit] + ADP + H(+). With respect to regulation, treatment with the His-directed reagents diethyl pyrocarbonate (DEPC) and dichloro-(2,2*:6*,2(-terpyridine))-platinum(II) dihydrate inhibits kinase activity, including autophosphorylation. Its function is as follows. Serine protein kinase that inhibits the mitochondrial pyruvate dehydrogenase (PDH) complex (mtPDC) by phosphorylation of the E1 alpha subunit on Ser residues, thus contributing to the regulation of glucose metabolism. The polypeptide is [Pyruvate dehydrogenase (acetyl-transferring)] kinase, mitochondrial (PDK) (Arabidopsis thaliana (Mouse-ear cress)).